The sequence spans 291 residues: Phytanoyl-CoA dioxygenase domain-containing protein 1 (291 aa).

The residue at position 55 (T55) is a Phosphothreonine. 2-oxoglutarate contacts are provided by residues K102, M141, H156–D158, and W174. Residues H156 and D158 each contribute to the Fe cation site. H246 serves as a coordination point for Fe cation. 2 residues coordinate 2-oxoglutarate: S248 and R257.

Belongs to the PhyH family. PHYHD1 subfamily. Requires Fe cation as cofactor.

Its activity is regulated as follows. Activity is increased by ascorbate. Inhibited by myristoyl-CoA. 2-oxoglutarate(2OG)-dependent dioxygenase that catalyzes the conversion of 2-oxoglutarate to succinate and CO(2) in an iron-dependent manner. However, does not couple 2OG turnover to the hydroxylation of acyl-coenzyme A derivatives, implying that it is not directly involved in phytanoyl coenzyme-A metabolism. Does not show detectable activity towards fatty acid CoA thioesters. In terms of biological role, isoform 2 probably lacks enzyme activity. Functionally, isoform 3 probably lacks enzyme activity. This chain is Phytanoyl-CoA dioxygenase domain-containing protein 1, found in Homo sapiens (Human).